The primary structure comprises 207 residues: uncharacterized protein (207 aa).

Catalysis depends on residues R80, E88, and R148.

The protein belongs to the thermonuclease family.

This is an uncharacterized protein from Methanocaldococcus jannaschii (strain ATCC 43067 / DSM 2661 / JAL-1 / JCM 10045 / NBRC 100440) (Methanococcus jannaschii).